A 331-amino-acid chain; its full sequence is Light-harvesting complex I LH35 proteins (331 aa).

The protein resides in the plastid. It is found in the chloroplast. The polypeptide is Light-harvesting complex I LH35 proteins (Euglena gracilis).